The chain runs to 128 residues: Hemoglobin subunit beta-1 (128 aa).

The region spanning 2–128 (HWTAEEKALV…VVDALSKGYH (127 aa)) is the Globin domain. Heme b-binding residues include H51 and H74.

It belongs to the globin family. Hb 1 is a heterotetramer of two alpha and two beta-1 chains. In terms of tissue distribution, red blood cells (at protein level).

In terms of biological role, involved in oxygen transport from gills to the various peripheral tissues. In Somniosus microcephalus (Greenland sleeper shark), this protein is Hemoglobin subunit beta-1.